Consider the following 542-residue polypeptide: Multidrug transporter DTR1 (542 aa).

N-linked (GlcNAc...) asparagine glycans are attached at residues asparagine 6 and asparagine 46. Residues 80–100 (LIFLIVIYNGFLGPLAGNVFI) form a helical membrane-spanning segment. N-linked (GlcNAc...) asparagine glycosylation is found at asparagine 111 and asparagine 118. Helical transmembrane passes span 119–139 (ATVS…GALA), 146–166 (ILYI…ASVP), 169–189 (IGSL…VISL), 210–230 (FMLG…LILL), and 237–257 (WLFG…ILLL). Residue asparagine 274 is glycosylated (N-linked (GlcNAc...) asparagine). 4 helical membrane passes run 332-352 (IMTF…FCTY), 374-394 (IGAC…IGGH), 419-439 (ILTV…GWCI), and 441-461 (FHYH…GLTW). Asparagine 463 carries an N-linked (GlcNAc...) asparagine glycan. 2 consecutive transmembrane segments (helical) span residues 481-501 (AIAV…ALIA) and 511-531 (FCFL…LVLI).

The protein belongs to the major facilitator superfamily. CAR1 family.

It localises to the cell membrane. Plasma membrane acetic acid exporter, relieving the stress induced upon cells within hemocytes, and thus enabling increased proliferation and virulence against Galleria mellonella larvae. Confers resistance to weak acid and oxidative stress, but not to antifungal drugs. The protein is Multidrug transporter DTR1 of Candida glabrata (strain ATCC 2001 / BCRC 20586 / JCM 3761 / NBRC 0622 / NRRL Y-65 / CBS 138) (Yeast).